We begin with the raw amino-acid sequence, 336 residues long: UDP-N-acetylglucosamine--N-acetylmuramyl-(pentapeptide) pyrophosphoryl-undecaprenol N-acetylglucosamine transferase (336 aa).

UDP-N-acetyl-alpha-D-glucosamine contacts are provided by Asn102, Arg144, Ser172, and Gln264.

The protein belongs to the glycosyltransferase 28 family. MurG subfamily.

It localises to the cell membrane. The catalysed reaction is di-trans,octa-cis-undecaprenyl diphospho-N-acetyl-alpha-D-muramoyl-L-alanyl-D-glutamyl-meso-2,6-diaminopimeloyl-D-alanyl-D-alanine + UDP-N-acetyl-alpha-D-glucosamine = di-trans,octa-cis-undecaprenyl diphospho-[N-acetyl-alpha-D-glucosaminyl-(1-&gt;4)]-N-acetyl-alpha-D-muramoyl-L-alanyl-D-glutamyl-meso-2,6-diaminopimeloyl-D-alanyl-D-alanine + UDP + H(+). The protein operates within cell wall biogenesis; peptidoglycan biosynthesis. Cell wall formation. Catalyzes the transfer of a GlcNAc subunit on undecaprenyl-pyrophosphoryl-MurNAc-pentapeptide (lipid intermediate I) to form undecaprenyl-pyrophosphoryl-MurNAc-(pentapeptide)GlcNAc (lipid intermediate II). The chain is UDP-N-acetylglucosamine--N-acetylmuramyl-(pentapeptide) pyrophosphoryl-undecaprenol N-acetylglucosamine transferase from Rubrobacter xylanophilus (strain DSM 9941 / JCM 11954 / NBRC 16129 / PRD-1).